We begin with the raw amino-acid sequence, 311 residues long: 4-diphosphocytidyl-2-C-methyl-D-erythritol kinase (311 aa).

Residue K9 is part of the active site. 95–105 (PLGAGLAGGST) is a binding site for ATP. The active site involves D137.

Belongs to the GHMP kinase family. IspE subfamily.

The catalysed reaction is 4-CDP-2-C-methyl-D-erythritol + ATP = 4-CDP-2-C-methyl-D-erythritol 2-phosphate + ADP + H(+). Its pathway is isoprenoid biosynthesis; isopentenyl diphosphate biosynthesis via DXP pathway; isopentenyl diphosphate from 1-deoxy-D-xylulose 5-phosphate: step 3/6. In terms of biological role, catalyzes the phosphorylation of the position 2 hydroxy group of 4-diphosphocytidyl-2C-methyl-D-erythritol. The polypeptide is 4-diphosphocytidyl-2-C-methyl-D-erythritol kinase (Thermosynechococcus vestitus (strain NIES-2133 / IAM M-273 / BP-1)).